Reading from the N-terminus, the 356-residue chain is Carminomycin 4-O-methyltransferase DnrK (356 aa).

S-adenosyl-L-methionine is bound at residue R153. Residue D163 coordinates substrate. Residues G187, E210, 237 to 238 (DF), and S252 contribute to the S-adenosyl-L-methionine site. Substrate-binding residues include N257 and R303.

Belongs to the class I-like SAM-binding methyltransferase superfamily. Cation-independent O-methyltransferase family. As to quaternary structure, homodimer and homotetramer in equilibrium.

It carries out the reaction carminomycin + S-adenosyl-L-methionine = daunorubicin + S-adenosyl-L-homocysteine + H(+). Its pathway is antibiotic biosynthesis; daunorubicin biosynthesis. The protein operates within antibiotic biosynthesis; carminomycin biosynthesis. Functionally, involved in the biosynthesis of the anthracyclines carminomycin and daunorubicin (daunomycin) which are aromatic polyketide antibiotics that exhibit high cytotoxicity and are widely applied in the chemotherapy of a variety of cancers. In vivo, catalyzes the transfer of a methyl group from S-adenosyl-L-methionine to the 4-O-position of carminomycin to form daunorubicin. In vitro, it also methylates the anthracyclines rhodomycin D (10-carbomethoxy-13-deoxycarminomycin) and 13-deoxy-carminomycin at the 4-hydroxyl position. It is quite specific with respect to the length of the carbohydrate chain at the C7 position, but it can accept substrates with bulky substituent at C10 position. This Streptomyces peucetius protein is Carminomycin 4-O-methyltransferase DnrK (dnrK).